The primary structure comprises 618 residues: MATIPDWKLQLLARRRQEEAAVRGREKAERERLSQMPAWKRGLLERRRAKLGLSPGEPSPAPGTTEAGPPDPDKSAVLLEAIGPVHQNRFIRQERQQQQQQQQQQQQQQRSEELLAERRPGLLEAREWRSSPGEMRDQSPKERESREERLSPREARERRLGIGGARESSPRPLESRDWRQSPGEAGDRSSRLSEVRKWRLSPGETPERSLRPAEPQEQSPRRKEVVESRLSPADSDHEKLGLTDAHKRRPDSGESQEQSLVLEASEWRLSSGEERKDCLEECGRKEERTLPGMVPEDITGSPETLTMEAAGSSSGGVEAADQRPIPVEDGERDLRLSEGWKWTLNSGKVRDRTPRDTETQSQKPESAEKHLGPLGAEAGEGEAEKEEAGAQGRPLSALQNRCSVPSPLPPEDAGTGGSRQQEEEAGELRPPPAAPLSPPPPAPPAPQPPGDPLMSRLFYGVKAGPGVGAPRRSGHTFTVNPRRSAPPAAAATPATPATADAAVPGAGKKRYPTAEEILVLGGYLRLSRSCLAKGSPERHHKQLKISFSETALETTYQYPSESSVLEELGPEPEAPSAPSPPAAQPDDEEDEEELLLLQRELQGGLRTKALIVDESCRR.

The segment covering 15 to 33 has biased composition (basic and acidic residues); sequence RRQEEAAVRGREKAERERL. The interval 15-505 is disordered; the sequence is RRQEEAAVRG…PATADAAVPG (491 aa). The residue at position 54 (Ser54) is a Phosphoserine. Residues 96–109 show a composition bias toward low complexity; sequence QQQQQQQQQQQQQQ. Composition is skewed to basic and acidic residues over residues 110 to 160 and 173 to 197; these read RSEE…ERRL and LESR…EVRK. A phosphoserine mark is found at Ser131, Ser139, Ser181, and Ser201. Thr205 is modified (phosphothreonine). Ser231 carries the post-translational modification Phosphoserine. Basic and acidic residues-rich tracts occupy residues 234–245 and 271–289; these read DSDHEKLGLTDA and SGEE…EERT. Positions 308 to 319 are enriched in low complexity; it reads EAAGSSSGGVEA. Basic and acidic residues predominate over residues 348 to 358; that stretch reads KVRDRTPRDTE. Pro residues predominate over residues 429-451; it reads RPPPAAPLSPPPPAPPAPQPPGD. Residue Ser437 is modified to Phosphoserine. Lys462 is modified (N6-acetyllysine). The segment covering 485–505 has biased composition (low complexity); sequence APPAAAATPATPATADAAVPG. Residue Ser535 is modified to Phosphoserine. The disordered stretch occupies residues 556 to 594; it reads YQYPSESSVLEELGPEPEAPSAPSPPAAQPDDEEDEEEL. Residues 572-583 show a composition bias toward pro residues; the sequence is PEAPSAPSPPAA. Residues 585 to 594 are compositionally biased toward acidic residues; sequence PDDEEDEEEL.

In terms of assembly, interacts with Protein phosphatase 1 (PP1).

The protein resides in the cytoplasm. It localises to the cytoskeleton. Its function is as follows. May target protein phosphatase 1 to F-actin cytoskeleton. This Sus scrofa (Pig) protein is Phostensin (PPP1R18).